The following is a 148-amino-acid chain: Deoxyuridine 5'-triphosphate nucleotidohydrolase (148 aa).

Substrate contacts are provided by residues 68–70, N81, 85–87, and K95; these read RSG and TID.

The protein belongs to the dUTPase family. Mg(2+) serves as cofactor.

It catalyses the reaction dUTP + H2O = dUMP + diphosphate + H(+). Its pathway is pyrimidine metabolism; dUMP biosynthesis; dUMP from dCTP (dUTP route): step 2/2. In terms of biological role, this enzyme is involved in nucleotide metabolism: it produces dUMP, the immediate precursor of thymidine nucleotides and it decreases the intracellular concentration of dUTP so that uracil cannot be incorporated into DNA. The protein is Deoxyuridine 5'-triphosphate nucleotidohydrolase of Thermoanaerobacter sp. (strain X514).